Reading from the N-terminus, the 175-residue chain is tRNA-specific adenosine deaminase 2 (175 aa).

The region spanning 8–133 is the CMP/dCMP-type deaminase domain; it reads EEIQNWMHKA…SVLNVSGDDI (126 aa). H59 provides a ligand contact to Zn(2+). E61 (proton donor) is an active-site residue. 2 residues coordinate Zn(2+): C95 and C98.

It belongs to the cytidine and deoxycytidylate deaminase family. ADAT2 subfamily. Zn(2+) serves as cofactor.

The enzyme catalyses adenosine(34) in tRNA + H2O + H(+) = inosine(34) in tRNA + NH4(+). Functionally, probably participates in deamination of adenosine-34 to inosine in many tRNAs. In Xenopus laevis (African clawed frog), this protein is tRNA-specific adenosine deaminase 2 (adat2).